The sequence spans 448 residues: Glucose-6-phosphate isomerase (448 aa).

Glu290 (proton donor) is an active-site residue. Active-site residues include His311 and Lys425.

The protein belongs to the GPI family.

The protein localises to the cytoplasm. The enzyme catalyses alpha-D-glucose 6-phosphate = beta-D-fructose 6-phosphate. The protein operates within carbohydrate biosynthesis; gluconeogenesis. Its pathway is carbohydrate degradation; glycolysis; D-glyceraldehyde 3-phosphate and glycerone phosphate from D-glucose: step 2/4. Its function is as follows. Catalyzes the reversible isomerization of glucose-6-phosphate to fructose-6-phosphate. The sequence is that of Glucose-6-phosphate isomerase from Lactococcus lactis subsp. lactis (strain IL1403) (Streptococcus lactis).